The chain runs to 154 residues: 6,7-dimethyl-8-ribityllumazine synthase (154 aa).

5-amino-6-(D-ribitylamino)uracil-binding positions include Phe-23, 57–59 (AFE), and 81–83 (AVI). 86 to 87 (ST) provides a ligand contact to (2S)-2-hydroxy-3-oxobutyl phosphate. The active-site Proton donor is the His-89. Phe-114 is a binding site for 5-amino-6-(D-ribitylamino)uracil. Position 128 (Arg-128) interacts with (2S)-2-hydroxy-3-oxobutyl phosphate.

The protein belongs to the DMRL synthase family.

It catalyses the reaction (2S)-2-hydroxy-3-oxobutyl phosphate + 5-amino-6-(D-ribitylamino)uracil = 6,7-dimethyl-8-(1-D-ribityl)lumazine + phosphate + 2 H2O + H(+). The protein operates within cofactor biosynthesis; riboflavin biosynthesis; riboflavin from 2-hydroxy-3-oxobutyl phosphate and 5-amino-6-(D-ribitylamino)uracil: step 1/2. Functionally, catalyzes the formation of 6,7-dimethyl-8-ribityllumazine by condensation of 5-amino-6-(D-ribitylamino)uracil with 3,4-dihydroxy-2-butanone 4-phosphate. This is the penultimate step in the biosynthesis of riboflavin. This chain is 6,7-dimethyl-8-ribityllumazine synthase, found in Syntrophotalea carbinolica (strain DSM 2380 / NBRC 103641 / GraBd1) (Pelobacter carbinolicus).